Here is a 205-residue protein sequence, read N- to C-terminus: Small ribosomal subunit protein uS4 (205 aa).

Over residues 1 to 16 the composition is skewed to basic and acidic residues; sequence MSKRESSKYKIDRRMG. The interval 1–46 is disordered; it reads MSKRESSKYKIDRRMGENIWGRPKSPVNRREYGPGQHGQRRKGKLS. In terms of domain architecture, S4 RNA-binding spans 94 to 157; that stretch reads SRLDAIVYRA…KQLVTVLEAV (64 aa).

Belongs to the universal ribosomal protein uS4 family. Part of the 30S ribosomal subunit. Contacts protein S5. The interaction surface between S4 and S5 is involved in control of translational fidelity.

One of the primary rRNA binding proteins, it binds directly to 16S rRNA where it nucleates assembly of the body of the 30S subunit. In terms of biological role, with S5 and S12 plays an important role in translational accuracy. The chain is Small ribosomal subunit protein uS4 from Rhizobium etli (strain ATCC 51251 / DSM 11541 / JCM 21823 / NBRC 15573 / CFN 42).